Here is a 221-residue protein sequence, read N- to C-terminus: Putative N-acetylmannosamine-6-phosphate 2-epimerase (221 aa).

This sequence belongs to the NanE family.

The enzyme catalyses an N-acyl-D-glucosamine 6-phosphate = an N-acyl-D-mannosamine 6-phosphate. The protein operates within amino-sugar metabolism; N-acetylneuraminate degradation; D-fructose 6-phosphate from N-acetylneuraminate: step 3/5. Converts N-acetylmannosamine-6-phosphate (ManNAc-6-P) to N-acetylglucosamine-6-phosphate (GlcNAc-6-P). This Clostridium perfringens (strain SM101 / Type A) protein is Putative N-acetylmannosamine-6-phosphate 2-epimerase.